We begin with the raw amino-acid sequence, 460 residues long: Cysteine--tRNA ligase (460 aa).

Cysteine 28 serves as a coordination point for Zn(2+). The 'HIGH' region signature appears at methionine 30–histidine 40. Zn(2+) contacts are provided by cysteine 209, histidine 234, and glutamate 238. Positions lysine 266–serine 270 match the 'KMSKS' region motif. Residue lysine 269 participates in ATP binding.

The protein belongs to the class-I aminoacyl-tRNA synthetase family. In terms of assembly, monomer. It depends on Zn(2+) as a cofactor.

Its subcellular location is the cytoplasm. The catalysed reaction is tRNA(Cys) + L-cysteine + ATP = L-cysteinyl-tRNA(Cys) + AMP + diphosphate. In Pseudomonas savastanoi pv. phaseolicola (strain 1448A / Race 6) (Pseudomonas syringae pv. phaseolicola (strain 1448A / Race 6)), this protein is Cysteine--tRNA ligase.